A 258-amino-acid chain; its full sequence is 4,5-dihydroxyphthalate decarboxylase (258 aa).

It to P.testosteroni DHP decarboxylase.

The enzyme catalyses 4,5-dihydroxyphthalate + H(+) = 3,4-dihydroxybenzoate + CO2. Its pathway is xenobiotic degradation; phthalate degradation; 3,4-dihydroxybenzoate from phthalate: step 3/3. The sequence is that of 4,5-dihydroxyphthalate decarboxylase (pht5) from Pseudomonas putida (Arthrobacter siderocapsulatus).